Consider the following 307-residue polypeptide: Ribonuclease Z (307 aa).

7 residues coordinate Zn(2+): histidine 63, histidine 65, aspartate 67, histidine 68, histidine 141, aspartate 212, and histidine 270. Aspartate 67 functions as the Proton acceptor in the catalytic mechanism.

The protein belongs to the RNase Z family. Homodimer. Zn(2+) serves as cofactor.

It carries out the reaction Endonucleolytic cleavage of RNA, removing extra 3' nucleotides from tRNA precursor, generating 3' termini of tRNAs. A 3'-hydroxy group is left at the tRNA terminus and a 5'-phosphoryl group is left at the trailer molecule.. Its function is as follows. Zinc phosphodiesterase, which displays some tRNA 3'-processing endonuclease activity. Probably involved in tRNA maturation, by removing a 3'-trailer from precursor tRNA. In Bacillus thuringiensis subsp. konkukian (strain 97-27), this protein is Ribonuclease Z.